The sequence spans 142 residues: Mediator of RNA polymerase II transcription subunit 9 (142 aa).

A disordered region spans residues 1–58 (MASSGVAGGRQAEDTLQPPPELLPESKPPPPPQPLPVAALPPPAAPRPQSPAGAKEEN). Ala2 bears the N-acetylalanine mark. A compositionally biased stretch (pro residues) spans 17–49 (QPPPELLPESKPPPPPQPLPVAALPPPAAPRPQ). A coiled-coil region spans residues 78-134 (DLHQDLNALKTKFQELRKLIGTMPGIHVSPEQQQQQLHSLREQVRTKNELLQKYKSL). Ser106 carries the post-translational modification Phosphoserine.

Belongs to the Mediator complex subunit 9 family. Component of the Mediator complex, which is composed of MED1, MED4, MED6, MED7, MED8, MED9, MED10, MED11, MED12, MED13, MED13L, MED14, MED15, MED16, MED17, MED18, MED19, MED20, MED21, MED22, MED23, MED24, MED25, MED26, MED27, MED29, MED30, MED31, CCNC, CDK8 and CDC2L6/CDK11. The MED12, MED13, CCNC and CDK8 subunits form a distinct module termed the CDK8 module. Mediator containing the CDK8 module is less active than Mediator lacking this module in supporting transcriptional activation. Individual preparations of the Mediator complex lacking one or more distinct subunits have been variously termed ARC, CRSP, DRIP, PC2, SMCC and TRAP.

Its subcellular location is the nucleus. Component of the Mediator complex, a coactivator involved in the regulated transcription of nearly all RNA polymerase II-dependent genes. Mediator functions as a bridge to convey information from gene-specific regulatory proteins to the basal RNA polymerase II transcription machinery. Mediator is recruited to promoters by direct interactions with regulatory proteins and serves as a scaffold for the assembly of a functional preinitiation complex with RNA polymerase II and the general transcription factors. This chain is Mediator of RNA polymerase II transcription subunit 9 (Med9), found in Mus musculus (Mouse).